A 122-amino-acid chain; its full sequence is Large ribosomal subunit protein uL14 (122 aa).

It belongs to the universal ribosomal protein uL14 family. As to quaternary structure, part of the 50S ribosomal subunit. Forms a cluster with proteins L3 and L19. In the 70S ribosome, L14 and L19 interact and together make contacts with the 16S rRNA in bridges B5 and B8.

In terms of biological role, binds to 23S rRNA. Forms part of two intersubunit bridges in the 70S ribosome. In Azorhizobium caulinodans (strain ATCC 43989 / DSM 5975 / JCM 20966 / LMG 6465 / NBRC 14845 / NCIMB 13405 / ORS 571), this protein is Large ribosomal subunit protein uL14.